The sequence spans 824 residues: Protein-glutamine gamma-glutamyltransferase K (824 aa).

A compositionally biased stretch (basic and acidic residues) spans 1 to 10 (MEGPRSDVGR). 2 disordered regions span residues 1-44 (MEGP…GGRS) and 61-110 (DDWG…AAGD). The residue at position 20 (Thr20) is a Phosphothreonine. 5 positions are modified to phosphoserine: Ser22, Ser70, Ser92, Ser100, and Ser103. A compositionally biased stretch (low complexity) spans 65-76 (PEPSGSRSRGTS). The span at 85-100 (GDSRGRDSRGGRRPES) shows a compositional bias: basic and acidic residues. Residues Cys385, His444, and Asp467 contribute to the active site. Ca(2+) contacts are provided by Asn507, Asp509, Glu556, and Glu561. Positions 801–824 (RGFSEAVGDSRSGENIPMAFRGGA) are disordered. Ser812 is modified (phosphoserine).

It belongs to the transglutaminase superfamily. Transglutaminase family. Interacts with PLAAT4. The cofactor is Ca(2+). Post-translationally, palmitoylated. In terms of processing, the membrane anchorage region possesses a cluster of five cysteines within which fatty acid(s) may become thioester-linked. It is subject to phorbol ester-stimulated phosphorylation and is hypersensitive to proteolysis, which releases the enzyme in a soluble form. Tyrosine-phosphorylated.

Its subcellular location is the membrane. The catalysed reaction is L-glutaminyl-[protein] + L-lysyl-[protein] = [protein]-L-lysyl-N(6)-5-L-glutamyl-[protein] + NH4(+). Functionally, catalyzes the cross-linking of proteins and the conjugation of polyamines to proteins. Responsible for cross-linking epidermal proteins during formation of the stratum corneum. Involved in cell proliferation. The sequence is that of Protein-glutamine gamma-glutamyltransferase K (Tgm1) from Rattus norvegicus (Rat).